A 282-amino-acid polypeptide reads, in one-letter code: HTH-type transcriptional activator RhaR (282 aa).

Residues 179-277 form the HTH araC/xylS-type domain; it reads DKLITALANS…GMTPSQWRHL (99 aa). DNA-binding regions (H-T-H motif) lie at residues 196–217 and 244–267; these read DAFC…RAQT and ISEI…TRET.

As to quaternary structure, binds DNA as a dimer.

It localises to the cytoplasm. In terms of biological role, activates expression of the rhaSR operon in response to L-rhamnose. The polypeptide is HTH-type transcriptional activator RhaR (Salmonella arizonae (strain ATCC BAA-731 / CDC346-86 / RSK2980)).